A 750-amino-acid chain; its full sequence is Photosystem I P700 chlorophyll a apoprotein A1 (750 aa).

The next 8 helical transmembrane spans lie at Val-70 to Ala-93, Leu-156 to His-179, Leu-195 to Leu-219, Ile-291 to Tyr-309, Trp-346 to Tyr-369, Leu-385 to Val-411, Ala-433 to His-455, and Phe-531 to Leu-549. Residues Cys-573 and Cys-582 each contribute to the [4Fe-4S] cluster site. Helical transmembrane passes span His-589–Trp-610 and Leu-664–Phe-686. His-675 contacts chlorophyll a'. Chlorophyll a is bound by residues Met-683 and Tyr-691. Position 692 (Trp-692) interacts with phylloquinone. Residues Ala-724–Ala-744 form a helical membrane-spanning segment.

The protein belongs to the PsaA/PsaB family. The PsaA/B heterodimer binds the P700 chlorophyll special pair and subsequent electron acceptors. PSI consists of a core antenna complex that captures photons, and an electron transfer chain that converts photonic excitation into a charge separation. The eukaryotic PSI reaction center is composed of at least 11 subunits. The cofactor is P700 is a chlorophyll a/chlorophyll a' dimer, A0 is one or more chlorophyll a, A1 is one or both phylloquinones and FX is a shared 4Fe-4S iron-sulfur center..

Its subcellular location is the plastid. The protein localises to the chloroplast thylakoid membrane. It catalyses the reaction reduced [plastocyanin] + hnu + oxidized [2Fe-2S]-[ferredoxin] = oxidized [plastocyanin] + reduced [2Fe-2S]-[ferredoxin]. Its function is as follows. PsaA and PsaB bind P700, the primary electron donor of photosystem I (PSI), as well as the electron acceptors A0, A1 and FX. PSI is a plastocyanin-ferredoxin oxidoreductase, converting photonic excitation into a charge separation, which transfers an electron from the donor P700 chlorophyll pair to the spectroscopically characterized acceptors A0, A1, FX, FA and FB in turn. Oxidized P700 is reduced on the lumenal side of the thylakoid membrane by plastocyanin. The sequence is that of Photosystem I P700 chlorophyll a apoprotein A1 from Populus trichocarpa (Western balsam poplar).